The sequence spans 530 residues: Arginine--tRNA ligase (530 aa).

The 'HIGH' region signature appears at 113–123 (ANPTGPLHIGH).

It belongs to the class-I aminoacyl-tRNA synthetase family. In terms of assembly, monomer.

The protein resides in the cytoplasm. It catalyses the reaction tRNA(Arg) + L-arginine + ATP = L-arginyl-tRNA(Arg) + AMP + diphosphate. This is Arginine--tRNA ligase from Campylobacter jejuni subsp. jejuni serotype O:2 (strain ATCC 700819 / NCTC 11168).